The chain runs to 372 residues: Glutamate 5-kinase (372 aa).

Position 14 (lysine 14) interacts with ATP. Substrate-binding residues include serine 54, aspartate 141, and asparagine 153. 173–174 is a binding site for ATP; that stretch reads TD. The region spanning 280–358 is the PUA domain; that stretch reads RGHVVIDDGA…GEIESVLGYM (79 aa).

Belongs to the glutamate 5-kinase family.

It is found in the cytoplasm. It carries out the reaction L-glutamate + ATP = L-glutamyl 5-phosphate + ADP. It functions in the pathway amino-acid biosynthesis; L-proline biosynthesis; L-glutamate 5-semialdehyde from L-glutamate: step 1/2. Its function is as follows. Catalyzes the transfer of a phosphate group to glutamate to form L-glutamate 5-phosphate. The sequence is that of Glutamate 5-kinase from Paraburkholderia phymatum (strain DSM 17167 / CIP 108236 / LMG 21445 / STM815) (Burkholderia phymatum).